We begin with the raw amino-acid sequence, 287 residues long: 3-methyl-2-oxobutanoate hydroxymethyltransferase (287 aa).

Residues 1-19 (MSTLPKTLTLDTSTSRANP) show a composition bias toward polar residues. A disordered region spans residues 1 to 24 (MSTLPKTLTLDTSTSRANPTPQPM). Mg(2+) is bound by residues Asp66 and Asp105. Residues 66–67 (DS), Asp105, and Lys135 contribute to the 3-methyl-2-oxobutanoate site. Residue Glu137 participates in Mg(2+) binding. Residue Glu204 is the Proton acceptor of the active site.

This sequence belongs to the PanB family. Homodecamer; pentamer of dimers. Requires Mg(2+) as cofactor.

The protein resides in the cytoplasm. It carries out the reaction 3-methyl-2-oxobutanoate + (6R)-5,10-methylene-5,6,7,8-tetrahydrofolate + H2O = 2-dehydropantoate + (6S)-5,6,7,8-tetrahydrofolate. Its pathway is cofactor biosynthesis; (R)-pantothenate biosynthesis; (R)-pantoate from 3-methyl-2-oxobutanoate: step 1/2. In terms of biological role, catalyzes the reversible reaction in which hydroxymethyl group from 5,10-methylenetetrahydrofolate is transferred onto alpha-ketoisovalerate to form ketopantoate. In Sphingopyxis alaskensis (strain DSM 13593 / LMG 18877 / RB2256) (Sphingomonas alaskensis), this protein is 3-methyl-2-oxobutanoate hydroxymethyltransferase.